The chain runs to 763 residues: MVNKFLAGRLKKSKGKSFKGSSSKGNSKTVKSNNNDNVVVNAADLKWKPVEIPDTLDDFEGFYGLEEIDGVGVKIVGGQVQFVAHDDTKINGNEDNLDSKDKIEIDEDAPENDLVEFKNMDDMKDGELTDNSQSESEAEAESEAESEEEEEKTGDDEGEDGAEKVDNEVLKTNVFNTDIDLEDITPSDLPEWTEKVGELSFTTLHGLTKLGFNKPTLIQEEAIPMALKGEDIMGKASTGSGKTLAYGIPIIEKLMKSKSNTAPIGLIFTPTRELAKQVTDHLRKIASLIVDKSPHAILSLTGGLSIQKQERLLKYEGSGRIVVATPGRFLELIEKDKTLVERFSQISTLVLDEADRLLQDGHFDEFENILKYLGRESKNRKHNWQTMIFSATFATDLFDKLSHASWKNMKTPSKNENEMEIVLKHLMTKIHFKSKPILIDANPEDKVSSQIKESLIECAATERDLFCYYFVSMYPGKTLIFCNAIDSVKKLTAYLNNLNISCFQIHSSMTQKNRLRNLERYQQQSEKNKILGKPTVLVGSDVAARGLDIPGIQHVIHYHLPRTADVYIHRSGRTARANNEGVSVMICSPEEAMGPLRKLRKTLANKSGKDIIMGKKKWQKTVTMLPIDDTILSQLKERSRLASELADHDLASSSLQKDDTWMKKAAEDLGVDIDSDDEIKDTFLAKNINKKRNKTLGKDQKKVLVAQLNDLLKRPLRKDMRQRYLTGGLVNLADSLVKKRGHDHIIGHEKTDALETLKNKKRK.

Disordered regions lie at residues 1 to 35 (MVNK…SNNN) and 87 to 169 (DTKI…DNEV). Positions 18-35 (FKGSSSKGNSKTVKSNNN) are enriched in low complexity. The segment covering 104–114 (EIDEDAPENDL) has biased composition (acidic residues). Over residues 115–127 (VEFKNMDDMKDGE) the composition is skewed to basic and acidic residues. Positions 136-160 (SEAEAESEAESEEEEEKTGDDEGED) are enriched in acidic residues. The Q motif motif lies at 192-220 (WTEKVGELSFTTLHGLTKLGFNKPTLIQE). The Helicase ATP-binding domain maps to 223–411 (IPMALKGEDI…SHASWKNMKT (189 aa)). 236–243 (ASTGSGKT) is a binding site for ATP. A DEAD box motif is present at residues 352 to 355 (DEAD). Residues 450 to 619 (QIKESLIECA…DIIMGKKKWQ (170 aa)) enclose the Helicase C-terminal domain.

It belongs to the DEAD box helicase family. DDX24/MAK5 subfamily.

It is found in the nucleus. Its subcellular location is the nucleolus. The enzyme catalyses ATP + H2O = ADP + phosphate + H(+). Its function is as follows. ATP-binding RNA helicase involved in the biogenesis of 60S ribosomal subunits and is required for the normal formation of 25S and 5.8S rRNAs. This Vanderwaltozyma polyspora (strain ATCC 22028 / DSM 70294 / BCRC 21397 / CBS 2163 / NBRC 10782 / NRRL Y-8283 / UCD 57-17) (Kluyveromyces polysporus) protein is ATP-dependent RNA helicase MAK5 (MAK5).